A 257-amino-acid chain; its full sequence is Hydroxyacylglutathione hydrolase (257 aa).

His54, His56, Asp58, His59, His110, Asp131, and His169 together coordinate Zn(2+).

It belongs to the metallo-beta-lactamase superfamily. Glyoxalase II family. As to quaternary structure, monomer. It depends on Zn(2+) as a cofactor.

It catalyses the reaction an S-(2-hydroxyacyl)glutathione + H2O = a 2-hydroxy carboxylate + glutathione + H(+). The protein operates within secondary metabolite metabolism; methylglyoxal degradation; (R)-lactate from methylglyoxal: step 2/2. Functionally, thiolesterase that catalyzes the hydrolysis of S-D-lactoyl-glutathione to form glutathione and D-lactic acid. The sequence is that of Hydroxyacylglutathione hydrolase from Hahella chejuensis (strain KCTC 2396).